A 427-amino-acid chain; its full sequence is 3-phosphoshikimate 1-carboxyvinyltransferase (427 aa).

3-phosphoshikimate is bound by residues K22, S23, and R27. Phosphoenolpyruvate is bound at residue K22. The phosphoenolpyruvate site is built by G96 and R124. Residues S169, S170, Q171, S197, D313, N336, and K340 each contribute to the 3-phosphoshikimate site. Position 171 (Q171) interacts with phosphoenolpyruvate. The active-site Proton acceptor is D313. 3 residues coordinate phosphoenolpyruvate: R344, R386, and K411.

It belongs to the EPSP synthase family. Monomer.

The protein localises to the cytoplasm. The catalysed reaction is 3-phosphoshikimate + phosphoenolpyruvate = 5-O-(1-carboxyvinyl)-3-phosphoshikimate + phosphate. It functions in the pathway metabolic intermediate biosynthesis; chorismate biosynthesis; chorismate from D-erythrose 4-phosphate and phosphoenolpyruvate: step 6/7. Catalyzes the transfer of the enolpyruvyl moiety of phosphoenolpyruvate (PEP) to the 5-hydroxyl of shikimate-3-phosphate (S3P) to produce enolpyruvyl shikimate-3-phosphate and inorganic phosphate. The polypeptide is 3-phosphoshikimate 1-carboxyvinyltransferase (Escherichia coli O6:H1 (strain CFT073 / ATCC 700928 / UPEC)).